Here is a 251-residue protein sequence, read N- to C-terminus: Long tail fiber protein Gp37 (251 aa).

The tract at residues 134–137 is interaction with the receptor-recognizing protein gp38; that stretch reads DVYI. In terms of domain architecture, Peptidase S74 spans 139–237; it reads SDGRLKINKK…EEIKELKTPF (99 aa).

This sequence belongs to the S16-like long tail fiber protein Gp37 family. In terms of assembly, homotrimer. Interacts with the receptor-recognizing protein Gp38. Proteolytic cleavage and release of the chaperone in the host cytosol stabilizes the folded protein.

Its subcellular location is the virion. Functionally, constitues the trimeric tip of the long tail fiber that mediates the attachment to the host receptor, together with the receptor-recognizing protein Gp38. Its function is as follows. The C-terminal chaperone protein mediates homotrimerization and proper folding of the catalytic trimer. The sequence is that of Long tail fiber protein Gp37 (37) from Escherichia coli (Bacteriophage Ox2).